We begin with the raw amino-acid sequence, 346 residues long: NADH-ubiquinone oxidoreductase chain 2 (346 aa).

11 helical membrane passes run 3-23 (PLIF…VMMS), 25-45 (HWLM…PILM), 59-79 (YFLT…INLM), 96-116 (IIMT…FWVP), 122-142 (ISLT…MSIL), 149-169 (INLN…GWGG), 178-198 (IMAY…VYNP), 200-220 (LTML…MLFI), 242-262 (TLIL…GFMP), 274-294 (SSII…YFYM), and 322-342 (ITLL…TPML).

This sequence belongs to the complex I subunit 2 family. As to quaternary structure, core subunit of respiratory chain NADH dehydrogenase (Complex I) which is composed of 45 different subunits. Interacts with TMEM242.

It is found in the mitochondrion inner membrane. It catalyses the reaction a ubiquinone + NADH + 5 H(+)(in) = a ubiquinol + NAD(+) + 4 H(+)(out). Its function is as follows. Core subunit of the mitochondrial membrane respiratory chain NADH dehydrogenase (Complex I) which catalyzes electron transfer from NADH through the respiratory chain, using ubiquinone as an electron acceptor. Essential for the catalytic activity and assembly of complex I. The sequence is that of NADH-ubiquinone oxidoreductase chain 2 from Equus caballus (Horse).